We begin with the raw amino-acid sequence, 174 residues long: Shikimate kinase 2 (174 aa).

12–17 (GCGKTT) contributes to the ATP binding site. Positions 16 and 32 each coordinate Mg(2+). Aspartate 34, arginine 58, and glycine 79 together coordinate substrate. An LID domain region spans residues 112 to 126 (EAYPLADQRPTLTGR). Residue arginine 120 participates in ATP binding. Substrate is bound at residue arginine 139. Glutamine 155 contacts ATP.

This sequence belongs to the shikimate kinase family. AroL subfamily. Monomer. Mg(2+) is required as a cofactor.

It is found in the cytoplasm. It catalyses the reaction shikimate + ATP = 3-phosphoshikimate + ADP + H(+). Its pathway is metabolic intermediate biosynthesis; chorismate biosynthesis; chorismate from D-erythrose 4-phosphate and phosphoenolpyruvate: step 5/7. In terms of biological role, catalyzes the specific phosphorylation of the 3-hydroxyl group of shikimic acid using ATP as a cosubstrate. The chain is Shikimate kinase 2 from Erwinia tasmaniensis (strain DSM 17950 / CFBP 7177 / CIP 109463 / NCPPB 4357 / Et1/99).